Reading from the N-terminus, the 366-residue chain is Isopentenyl-diphosphate delta-isomerase (366 aa).

6 to 7 contacts substrate; sequence RK. FMN contacts are provided by residues Thr63, 64-66, Ser94, and Asn123; that span reads GMT. 94–96 is a binding site for substrate; the sequence is SQR. Substrate is bound at residue Gln158. Glu159 contributes to the Mg(2+) binding site. Residues Lys191, Ser216, Thr221, 273–275, and 294–295 each bind FMN; these read GIR and AN.

The protein belongs to the IPP isomerase type 2 family. Homooctamer. Dimer of tetramers. FMN is required as a cofactor. Requires NADPH as cofactor. Mg(2+) serves as cofactor.

Its subcellular location is the cytoplasm. It carries out the reaction isopentenyl diphosphate = dimethylallyl diphosphate. Involved in the biosynthesis of isoprenoids. Catalyzes the 1,3-allylic rearrangement of the homoallylic substrate isopentenyl (IPP) to its allylic isomer, dimethylallyl diphosphate (DMAPP). In Metallosphaera sedula (strain ATCC 51363 / DSM 5348 / JCM 9185 / NBRC 15509 / TH2), this protein is Isopentenyl-diphosphate delta-isomerase.